A 139-amino-acid chain; its full sequence is ATP synthase epsilon chain (139 aa).

Belongs to the ATPase epsilon chain family. F-type ATPases have 2 components, CF(1) - the catalytic core - and CF(0) - the membrane proton channel. CF(1) has five subunits: alpha(3), beta(3), gamma(1), delta(1), epsilon(1). CF(0) has three main subunits: a, b and c.

It is found in the cell membrane. Produces ATP from ADP in the presence of a proton gradient across the membrane. The polypeptide is ATP synthase epsilon chain (Enterococcus faecalis (strain ATCC 700802 / V583)).